Consider the following 704-residue polypeptide: Phytyl ester synthase 1, chloroplastic (704 aa).

Residues 1–27 (MATCSSSLLVLPNLRLSSNQRRNFKVR) constitute a chloroplast transit peptide.

It belongs to the diacylglycerol acyltransferase family. Interacts with PGM48. Mostly expressed in flowers (e.g. sepals, petals and stamen).

It localises to the plastid. It is found in the chloroplast. The protein resides in the plastoglobule. It carries out the reaction a 1,2-diacyl-3-O-(beta-D-galactosyl)-sn-glycerol + a 1,2-diacylglycerol = an acyl-3-O-(beta-D-galactosyl)-sn-glycerol + a triacylglycerol. The catalysed reaction is a 1,2-diacylglycerol + a fatty acyl-CoA = a triacylglycerol + CoA. The enzyme catalyses a fatty acyl-[ACP] + a 1,2-diacylglycerol = a triacylglycerol + holo-[ACP]. It catalyses the reaction phytol + a fatty acyl-CoA = a fatty acid phytyl ester + CoA. It carries out the reaction phytol + tetradecanoyl-CoA = tetradecanoate phytyl ester + CoA. The catalysed reaction is a 1,3-diacylglycerol + a fatty acyl-CoA = a triacylglycerol + CoA. The enzyme catalyses 1,2-dihexanoylglycerol + tetradecanoyl-CoA = 1,2-dihexanoyl-3-tetradecanoylglycerol + CoA. It catalyses the reaction 1,2-dihexanoylglycerol + hexadecanoyl-CoA = 1,2-dihexanoyl-3-hexadecanoylglycerol + CoA. It carries out the reaction 1,2-dihexanoylglycerol + octadecanoyl-CoA = 1,2-dihexanoyl-3-octadecanoylglycerol + CoA. The catalysed reaction is (7Z,10Z,13Z)-hexadecatrienoyl-CoA + 1,2-dihexanoylglycerol = 1,2-dihexanoyl-3-(7Z,10Z,13Z-hexadecatrienoyl)-glycerol + CoA. The enzyme catalyses 1,2-dihexanoylglycerol + (9Z)-octadecenoyl-CoA = 1,2-dihexanoyl-3-(9Z-octadecenoyl)-glycerol + CoA. It catalyses the reaction 1,2-dihexanoylglycerol + (9Z,12Z,15Z)-octadecatrienoyl-CoA = 1,2-dihexanoyl-3-(9Z,12Z,15Z-octadecatrienoyl)-glycerol + CoA. It carries out the reaction phytol + decanoyl-CoA = decanoate phytyl ester + CoA. The catalysed reaction is (7Z,10Z,13Z)-hexadecatrienoyl-CoA + phytol = (7Z,10Z,13Z)-hexadecatrienoate phytyl ester + CoA. The enzyme catalyses phytol + dodecanoyl-CoA = dodecanoate phytyl ester + CoA. Its function is as follows. Acyltransferase involved in fatty acid phytyl ester synthesis in chloroplasts, a process required for the maintenance of the photosynthetic membrane integrity during abiotic stress and senescence. Exhibits phytyl ester synthesis and diacylglycerol acyltransferase activities with broad substrate specificities, and can employ acyl-CoAs, acyl carrier proteins, and galactolipids as acyl donors. The chain is Phytyl ester synthase 1, chloroplastic from Arabidopsis thaliana (Mouse-ear cress).